Consider the following 358-residue polypeptide: Type II restriction enzyme CviJI (358 aa).

It depends on Mg(2+) as a cofactor.

The catalysed reaction is Endonucleolytic cleavage of DNA to give specific double-stranded fragments with terminal 5'-phosphates.. Functionally, a P subtype restriction enzyme that recognizes the double-stranded sequence 5'-RGCY-3' and cleaves after G-2. In the presence of ATP, there is a relaxation of its specificity and it can cleave 5'-RGCN-3' and 5'-YGCY-3', but not 5'-YGCR-3' (R.CviJI* activity). The chain is Type II restriction enzyme CviJI from Paramecium bursaria Chlorella virus IL3A (PBCV-IL3A).